Consider the following 85-residue polypeptide: uncharacterized protein (85 aa).

The protein belongs to the ycf76 family.

It is found in the plastid. The protein localises to the chloroplast. This is an uncharacterized protein from Saccharum hybrid (Sugarcane).